A 420-amino-acid chain; its full sequence is WD repeat-containing protein 21 (420 aa).

The short motif at 73–75 (RQF) is the DDB-boX element. 3 WD repeats span residues 251-289 (QSKGDVFSLKYLGDNLVIAGCRNKSVLVYDLRTKKECVQ), 293-332 (HGSSICSMQNLDFSQPKLLVSGLESKISLYDCRFLQSKKR), and 341-383 (GHSN…PFKE).

The protein localises to the cytoplasm. It localises to the nucleus. This is WD repeat-containing protein 21 (wdr21) from Schizosaccharomyces pombe (strain 972 / ATCC 24843) (Fission yeast).